A 319-amino-acid chain; its full sequence is DNA-directed RNA polymerases II, IV and V subunit 3 (319 aa).

The residue at position 1 (M1) is an N-acetylmethionine.

This sequence belongs to the archaeal Rpo3/eukaryotic RPB3 RNA polymerase subunit family. Component of the RNA polymerase II complex consisting of at least 12 subunits. Interacts with SHH1, CLSY1, NRPB11 and NRPD1. Interacts with IYO.

Its subcellular location is the nucleus. In terms of biological role, DNA-dependent RNA polymerase catalyzes the transcription of DNA into RNA using the four ribonucleoside triphosphates as substrates. Component of RNA polymerase II which synthesizes mRNA precursors and many functional non-coding RNAs. Pol II is the central component of the basal RNA polymerase II transcription machinery. It is composed of mobile elements that move relative to each other. NRPB3 is part of the core element with the central large cleft and the clamp element that moves to open and close the cleft. Component of RNA polymerases IV and V which mediate short-interfering RNAs (siRNA) accumulation and subsequent RNA-directed DNA methylation-dependent (RdDM) transcriptional gene silencing (TGS) of endogenous repeated sequences, including transposable elements. This chain is DNA-directed RNA polymerases II, IV and V subunit 3 (NRPB3), found in Arabidopsis thaliana (Mouse-ear cress).